The sequence spans 181 residues: ATP synthase subunit delta (181 aa).

It belongs to the ATPase delta chain family. As to quaternary structure, F-type ATPases have 2 components, F(1) - the catalytic core - and F(0) - the membrane proton channel. F(1) has five subunits: alpha(3), beta(3), gamma(1), delta(1), epsilon(1). F(0) has three main subunits: a(1), b(2) and c(10-14). The alpha and beta chains form an alternating ring which encloses part of the gamma chain. F(1) is attached to F(0) by a central stalk formed by the gamma and epsilon chains, while a peripheral stalk is formed by the delta and b chains.

It is found in the cell inner membrane. Functionally, f(1)F(0) ATP synthase produces ATP from ADP in the presence of a proton or sodium gradient. F-type ATPases consist of two structural domains, F(1) containing the extramembraneous catalytic core and F(0) containing the membrane proton channel, linked together by a central stalk and a peripheral stalk. During catalysis, ATP synthesis in the catalytic domain of F(1) is coupled via a rotary mechanism of the central stalk subunits to proton translocation. Its function is as follows. This protein is part of the stalk that links CF(0) to CF(1). It either transmits conformational changes from CF(0) to CF(1) or is implicated in proton conduction. This is ATP synthase subunit delta from Blochmanniella pennsylvanica (strain BPEN).